A 254-amino-acid chain; its full sequence is Probable phosphatase Shew185_1467 (254 aa).

Zn(2+) is bound by residues His-8, His-10, His-16, His-41, Glu-74, His-102, His-132, Asp-193, and His-195.

It belongs to the PHP family. Requires Zn(2+) as cofactor.

This is Probable phosphatase Shew185_1467 from Shewanella baltica (strain OS185).